A 126-amino-acid chain; its full sequence is Small ribosomal subunit protein eS6 (126 aa).

Belongs to the eukaryotic ribosomal protein eS6 family.

The protein is Small ribosomal subunit protein eS6 of Nanoarchaeum equitans (strain Kin4-M).